We begin with the raw amino-acid sequence, 947 residues long: Translation initiation factor IF-2 (947 aa).

The disordered stretch occupies residues 55–361; it reads TKDAQAGSAK…PVTERKFHEL (307 aa). Residues 63–73 show a composition bias toward basic and acidic residues; sequence AKDKQVAEQKA. Low complexity predominate over residues 76-90; the sequence is AKATTPQPAAATQEA. 3 stretches are compositionally biased toward basic and acidic residues: residues 103-116, 125-134, and 170-183; these read FKAE…EQAA, SNDRKSDYRQ, and NDGH…DKNR. Residues 190 to 204 show a composition bias toward low complexity; that stretch reads RQQDTGRQGQTQAGA. Composition is skewed to basic and acidic residues over residues 225 to 249, 257 to 267, and 294 to 311; these read ARQR…RQEA, QTEDKKHREAS, and NRPD…DGQK. The segment covering 316–334 has biased composition (low complexity); the sequence is SWNSQNQVRNQKNSNWNNN. A compositionally biased stretch (basic residues) spans 335–345; it reads KKNKKGKHHKN. Residues 448 to 617 enclose the tr-type G domain; that stretch reads ERAPVVTIMG…LLVAEVEELK (170 aa). Residues 457 to 464 are G1; it reads GHVDHGKT. 457–464 serves as a coordination point for GTP; that stretch reads GHVDHGKT. A G2 region spans residues 482–486; sequence GITQH. The tract at residues 503–506 is G3; it reads DTPG. Residues 503-507 and 557-560 each bind GTP; these read DTPGH and NKID. Residues 557–560 form a G4 region; the sequence is NKID. The interval 593 to 595 is G5; the sequence is SAK.

The protein belongs to the TRAFAC class translation factor GTPase superfamily. Classic translation factor GTPase family. IF-2 subfamily.

The protein resides in the cytoplasm. One of the essential components for the initiation of protein synthesis. Protects formylmethionyl-tRNA from spontaneous hydrolysis and promotes its binding to the 30S ribosomal subunits. Also involved in the hydrolysis of GTP during the formation of the 70S ribosomal complex. The sequence is that of Translation initiation factor IF-2 from Streptococcus equi subsp. zooepidemicus (strain MGCS10565).